Here is a 420-residue protein sequence, read N- to C-terminus: ATP-dependent Clp protease ATP-binding subunit ClpX (420 aa).

In terms of domain architecture, ClpX-type ZB spans K4–H57. Positions 16, 19, 38, and 41 each coordinate Zn(2+). P122 to L129 lines the ATP pocket.

It belongs to the ClpX chaperone family. As to quaternary structure, component of the ClpX-ClpP complex. Forms a hexameric ring that, in the presence of ATP, binds to fourteen ClpP subunits assembled into a disk-like structure with a central cavity, resembling the structure of eukaryotic proteasomes.

ATP-dependent specificity component of the Clp protease. It directs the protease to specific substrates. Can perform chaperone functions in the absence of ClpP. The protein is ATP-dependent Clp protease ATP-binding subunit ClpX of Leptospira interrogans serogroup Icterohaemorrhagiae serovar copenhageni (strain Fiocruz L1-130).